Here is a 123-residue protein sequence, read N- to C-terminus: ATP synthase epsilon chain (123 aa).

Belongs to the ATPase epsilon chain family. In terms of assembly, F-type ATPases have 2 components, CF(1) - the catalytic core - and CF(0) - the membrane proton channel. CF(1) has five subunits: alpha(3), beta(3), gamma(1), delta(1), epsilon(1). CF(0) has three main subunits: a, b and c.

The protein resides in the cell inner membrane. Produces ATP from ADP in the presence of a proton gradient across the membrane. This Helicobacter pylori (strain ATCC 700392 / 26695) (Campylobacter pylori) protein is ATP synthase epsilon chain (atpC).